The chain runs to 148 residues: Large ribosomal subunit protein bL9 (148 aa).

This sequence belongs to the bacterial ribosomal protein bL9 family.

Functionally, binds to the 23S rRNA. In Clostridium perfringens (strain ATCC 13124 / DSM 756 / JCM 1290 / NCIMB 6125 / NCTC 8237 / Type A), this protein is Large ribosomal subunit protein bL9.